The sequence spans 220 residues: Small ribosomal subunit protein uS3 (220 aa).

One can recognise a KH type-2 domain in the interval 43–111 (IRSYLTKTLD…QVQLNILEVK (69 aa)).

Belongs to the universal ribosomal protein uS3 family. As to quaternary structure, part of the 30S ribosomal subunit. Forms a tight complex with proteins S10 and S14.

Functionally, binds the lower part of the 30S subunit head. Binds mRNA in the 70S ribosome, positioning it for translation. The chain is Small ribosomal subunit protein uS3 from Tropheryma whipplei (strain TW08/27) (Whipple's bacillus).